The following is a 1676-amino-acid chain: DNA-directed RNA polymerase subunit beta'-beta'' (1676 aa).

A DNA-directed RNA polymerase subunit beta' region spans residues 1–582 (MCDAIQIRLA…FLKTTPGRII (582 aa)). Zn(2+) is bound by residues cysteine 64, cysteine 66, cysteine 79, and cysteine 82. The Mg(2+) site is built by aspartate 454, aspartate 456, and aspartate 458. The interval 583-1676 (FYQQAAYHVG…IPAGTGAKYL (1094 aa)) is DNA-directed RNA polymerase subunit beta''. The Zn(2+) site is built by cysteine 804, cysteine 859, cysteine 866, and cysteine 869.

In the N-terminal section; belongs to the RNA polymerase beta' chain family. RpoC1 subfamily. The protein in the C-terminal section; belongs to the RNA polymerase beta' chain family. RpoC2 subfamily. In plastids the minimal PEP RNA polymerase catalytic core is composed of four subunits: alpha, beta, beta', and beta''. When a (nuclear-encoded) sigma factor is associated with the core the holoenzyme is formed, which can initiate transcription. Beta' and beta'' are fused in this algae. Mg(2+) is required as a cofactor. The cofactor is Zn(2+).

The protein localises to the plastid. It localises to the chloroplast. It carries out the reaction RNA(n) + a ribonucleoside 5'-triphosphate = RNA(n+1) + diphosphate. DNA-dependent RNA polymerase catalyzes the transcription of DNA into RNA using the four ribonucleoside triphosphates as substrates. The chain is DNA-directed RNA polymerase subunit beta'-beta'' from Cyanidioschyzon merolae (strain NIES-3377 / 10D) (Unicellular red alga).